The following is a 93-amino-acid chain: MKIGVLFTIISMLCLLEVRKICSKKEGGYPRYFSFGYKCQNWGTNEYCRTVCQLHKGEYGYCYAGDCYCEGLTEENRLFWNVYRKYCKNPLFD.

The N-terminal stretch at 1–23 (MKIGVLFTIISMLCLLEVRKICS) is a signal peptide. 4 cysteine pairs are disulfide-bonded: Cys-22–Cys-87, Cys-39–Cys-62, Cys-48–Cys-67, and Cys-52–Cys-69. In terms of domain architecture, LCN-type CS-alpha/beta spans 26–88 (EGGYPRYFSF…FWNVYRKYCK (63 aa)).

This sequence belongs to the long (4 C-C) scorpion toxin superfamily. Expressed by the venom gland.

It localises to the secreted. In terms of biological role, the edited BmKBTx-like may modulate voltage-gated sodium channels (Nav). Functionally, the non-edited form is able to form a heterodimer. In orthologs, a heterodimer with LVP beta-chain induces lipolysis in rat adipocytes, which is mediated through the beta-2 adrenergic receptor pathway (ADRB2). Since no LVP beta-chains have been identified in the venom of this scorpion, it is possible that this protein is not involved in a lipolysis process. The protein is Putative sodium channel toxin Ts41 of Tityus serrulatus (Brazilian scorpion).